Reading from the N-terminus, the 151-residue chain is Ribosome-binding factor A (151 aa).

A disordered region spans residues 120–151; sequence RSPKVVRDLDDTSSDDTSPDANTDTDKETDAE.

Belongs to the RbfA family. In terms of assembly, monomer. Binds 30S ribosomal subunits, but not 50S ribosomal subunits or 70S ribosomes.

Its subcellular location is the cytoplasm. In terms of biological role, one of several proteins that assist in the late maturation steps of the functional core of the 30S ribosomal subunit. Associates with free 30S ribosomal subunits (but not with 30S subunits that are part of 70S ribosomes or polysomes). Required for efficient processing of 16S rRNA. May interact with the 5'-terminal helix region of 16S rRNA. This Xanthobacter autotrophicus (strain ATCC BAA-1158 / Py2) protein is Ribosome-binding factor A.